A 190-amino-acid polypeptide reads, in one-letter code: Xanthine phosphoribosyltransferase (190 aa).

The xanthine site is built by Leu20 and Asn27. A 5-phospho-alpha-D-ribose 1-diphosphate-binding site is contributed by 128-132 (ANGKA). Position 156 (Lys156) interacts with xanthine.

It belongs to the purine/pyrimidine phosphoribosyltransferase family. Xpt subfamily. Homodimer.

It localises to the cytoplasm. The enzyme catalyses XMP + diphosphate = xanthine + 5-phospho-alpha-D-ribose 1-diphosphate. It functions in the pathway purine metabolism; XMP biosynthesis via salvage pathway; XMP from xanthine: step 1/1. Functionally, converts the preformed base xanthine, a product of nucleic acid breakdown, to xanthosine 5'-monophosphate (XMP), so it can be reused for RNA or DNA synthesis. This chain is Xanthine phosphoribosyltransferase, found in Finegoldia magna (strain ATCC 29328 / DSM 20472 / WAL 2508) (Peptostreptococcus magnus).